A 359-amino-acid polypeptide reads, in one-letter code: Phospho-N-acetylmuramoyl-pentapeptide-transferase (359 aa).

The next 10 helical transmembrane spans lie at 26-46 (TIYAAITALIICFLLGPWLIR), 75-95 (GGVLIIFAVVVSTLLWANLTI), 97-117 (YVWLVLMVTLGYGLIGFADDY), 134-154 (LACEVCIALLVSVVLYAKPGF), 166-186 (VLPDLGWGYIFLSTFIIVGAA), 197-217 (GLAIGPAITCFMTYLLFAYFA), 233-253 (GVGELSIFCGAIVGAGIGFLW), 261-281 (VFMGDTGSLSLGGALGCLAIV), 286-306 (ILLAIVGGIFVLETFSVIFQV), and 336-356 (KVIVRFWIISILLALLAISTL).

It belongs to the glycosyltransferase 4 family. MraY subfamily. Mg(2+) serves as cofactor.

Its subcellular location is the cell inner membrane. It carries out the reaction UDP-N-acetyl-alpha-D-muramoyl-L-alanyl-gamma-D-glutamyl-meso-2,6-diaminopimeloyl-D-alanyl-D-alanine + di-trans,octa-cis-undecaprenyl phosphate = di-trans,octa-cis-undecaprenyl diphospho-N-acetyl-alpha-D-muramoyl-L-alanyl-D-glutamyl-meso-2,6-diaminopimeloyl-D-alanyl-D-alanine + UMP. It participates in cell wall biogenesis; peptidoglycan biosynthesis. Its function is as follows. Catalyzes the initial step of the lipid cycle reactions in the biosynthesis of the cell wall peptidoglycan: transfers peptidoglycan precursor phospho-MurNAc-pentapeptide from UDP-MurNAc-pentapeptide onto the lipid carrier undecaprenyl phosphate, yielding undecaprenyl-pyrophosphoryl-MurNAc-pentapeptide, known as lipid I. The protein is Phospho-N-acetylmuramoyl-pentapeptide-transferase of Syntrophus aciditrophicus (strain SB).